Here is a 577-residue protein sequence, read N- to C-terminus: Anthranilate synthase alpha subunit 1, chloroplastic (577 aa).

Residues M1–R34 constitute a chloroplast transit peptide.

This sequence belongs to the anthranilate synthase component I family. Heterotetramer consisting of two non-identical subunits: a beta subunit and a large alpha subunit.

Its subcellular location is the plastid. The protein localises to the chloroplast. It carries out the reaction chorismate + L-glutamine = anthranilate + pyruvate + L-glutamate + H(+). Its pathway is amino-acid biosynthesis; L-tryptophan biosynthesis; L-tryptophan from chorismate: step 1/5. Feedback inhibition by tryptophan. Functionally, part of a heterotetrameric complex that catalyzes the two-step biosynthesis of anthranilate, an intermediate in the biosynthesis of L-tryptophan. In the first step, the glutamine-binding beta subunit of anthranilate synthase (AS) provides the glutamine amidotransferase activity which generates ammonia as a substrate that, along with chorismate, is used in the second step, catalyzed by the large alpha subunit of AS to produce anthranilate. The protein is Anthranilate synthase alpha subunit 1, chloroplastic of Oryza sativa subsp. japonica (Rice).